We begin with the raw amino-acid sequence, 308 residues long: Very-long-chain enoyl-CoA reductase (308 aa).

Over 1–86 (MKHYEVEIRD…YFRDLGAQIS (86 aa)) the chain is Cytoplasmic. Residue Lys-22 is modified to N6-acetyllysine. Residue Ser-58 is modified to Phosphoserine. Lys-60 bears the N6-acetyllysine mark. A helical transmembrane segment spans residues 87-106 (WVTVFLTEYAGPLFIYLLFY). At 107–124 (FRVPFIYGRKYDFTSSRH) the chain is on the lumenal side. The chain crosses the membrane as a helical span at residues 125–147 (TVVHLACMCHSFHYIKRLLETLF). The Cytoplasmic segment spans residues 148–158 (VHRFSHGTMPL). Residues 159–180 (RNIFKNCTYYWGFAAWMAYYIN) traverse the membrane as a helical segment. Residues 181–189 (HPLYTPPTY) are Lumenal-facing. The chain crosses the membrane as a helical span at residues 190–216 (GVQQVKLALAIFVICQLGNFSIHMALR). Residues 217–245 (DLRPAGSKTRKIPYPTKNPFTWLFLLVSC) are Cytoplasmic-facing. The chain crosses the membrane as a helical span at residues 246-262 (PNYTYEVGSWIGFAIMT). Residues 263–264 (QC) are Lumenal-facing. Residues 265-292 (VPVALFSLVGFTQMTIWAKGKHRSYLKE) form a helical membrane-spanning segment. The Cytoplasmic portion of the chain corresponds to 293–308 (FRDYPPLRMPIIPFLL).

The protein belongs to the steroid 5-alpha reductase family. Interacts with ELOVL1 and LASS2. Post-translationally, glycosylated. Expressed at high levels in brain and is also found at lower levels in several other tissues.

It localises to the endoplasmic reticulum membrane. The enzyme catalyses a very-long-chain 2,3-saturated fatty acyl-CoA + NADP(+) = a very-long-chain (2E)-enoyl-CoA + NADPH + H(+). The catalysed reaction is octadecanoyl-CoA + NADP(+) = (2E)-octadecenoyl-CoA + NADPH + H(+). It catalyses the reaction (2E,7Z,10Z,13Z,16Z)-docosapentaenoyl-CoA + NADPH + H(+) = (7Z,10Z,13Z,16Z)-docosatetraenoyl-CoA + NADP(+). It carries out the reaction (2E,7Z,10Z,13Z,16Z,19Z)-docosahexaenoyl-CoA + NADPH + H(+) = (7Z,10Z,13Z,16Z,19Z)-docosapentaenoyl-CoA + NADP(+). The enzyme catalyses (2E,8Z,11Z,14Z)-eicosatetraenoyl-CoA + NADPH + H(+) = (8Z,11Z,14Z)-eicosatrienoyl-CoA + NADP(+). The catalysed reaction is (2E)-hexadecenoyl-CoA + NADPH + H(+) = hexadecanoyl-CoA + NADP(+). It functions in the pathway lipid metabolism; fatty acid biosynthesis. It participates in lipid metabolism; sphingolipid metabolism. Involved in both the production of very long-chain fatty acids for sphingolipid synthesis and the degradation of the sphingosine moiety in sphingolipids through the sphingosine 1-phosphate metabolic pathway. Catalyzes the last of the four reactions of the long-chain fatty acids elongation cycle. This endoplasmic reticulum-bound enzymatic process, allows the addition of 2 carbons to the chain of long- and very long-chain fatty acids/VLCFAs per cycle. This enzyme reduces the trans-2,3-enoyl-CoA fatty acid intermediate to an acyl-CoA that can be further elongated by entering a new cycle of elongation. Thereby, it participates in the production of VLCFAs of different chain lengths that are involved in multiple biological processes as precursors of membrane lipids and lipid mediators. Catalyzes the saturation step of the sphingosine 1-phosphate metabolic pathway, the conversion of trans-2-hexadecenoyl-CoA to palmitoyl-CoA. This chain is Very-long-chain enoyl-CoA reductase (Tecr), found in Rattus norvegicus (Rat).